Consider the following 77-residue polypeptide: U8-lycotoxin-Ls1f (77 aa).

The first 20 residues, 1–20, serve as a signal peptide directing secretion; it reads MKLIIFTGLVLFAIVSLIEV. A propeptide spanning residues 21–26 is cleaved from the precursor; that stretch reads QADNER.

It belongs to the neurotoxin 19 (CSTX) family. 08 (U8-Lctx) subfamily. Contains 4 disulfide bonds. Expressed by the venom gland.

It is found in the secreted. This is U8-lycotoxin-Ls1f from Lycosa singoriensis (Wolf spider).